The chain runs to 307 residues: Cytidine deaminase 7 (307 aa).

CMP/dCMP-type deaminase domains are found at residues 22–155 (TEPI…FTPD) and 185–307 (SDCS…FITE). 63-65 (NVE) contacts substrate. H76 serves as a coordination point for Zn(2+). E78 acts as the Proton donor in catalysis. Residues C111 and C114 each contribute to the Zn(2+) site.

The protein belongs to the cytidine and deoxycytidylate deaminase family. In terms of assembly, homodimer. Requires Zn(2+) as cofactor.

The catalysed reaction is cytidine + H2O + H(+) = uridine + NH4(+). It catalyses the reaction 2'-deoxycytidine + H2O + H(+) = 2'-deoxyuridine + NH4(+). This enzyme scavenges exogenous and endogenous cytidine and 2'-deoxycytidine for UMP synthesis. This is Cytidine deaminase 7 (CDA7) from Arabidopsis thaliana (Mouse-ear cress).